A 527-amino-acid polypeptide reads, in one-letter code: Catalase (527 aa).

Basic and acidic residues predominate over residues 1–22; the sequence is MADNRDPASDQMKHWKEQRAAQ. Positions 1–32 are disordered; that stretch reads MADNRDPASDQMKHWKEQRAAQKPDILTTGSG. Ala-2 carries the post-translational modification N-acetylalanine. Phosphoserine is present on Ser-9. The residue at position 13 (Lys-13) is an N6-succinyllysine. Active-site residues include His-75 and Asn-148. Positions 194, 201, 203, and 213 each coordinate NADP(+). Position 221 is an N6-succinyllysine (Lys-221). Residue Lys-233 is modified to N6-acetyllysine. Positions 237, 303, and 305 each coordinate NADP(+). Heme is bound at residue Tyr-358. Ser-417 and Ser-434 each carry phosphoserine. Position 480 is an N6-acetyllysine; alternate (Lys-480). Lys-480 bears the N6-succinyllysine; alternate mark. Lys-499 carries the N6-acetyllysine modification. Position 511 is a phosphothreonine (Thr-511). A Phosphoserine modification is found at Ser-517. The Microbody targeting signal; atypical motif lies at 524-527; sequence KANL.

Belongs to the catalase family. Homotetramer. Interacts (via microbody targeting signal) with PEX5, monomeric form interacts with PEX5, leading to its translocation into peroxisomes. It depends on heme as a cofactor. The cofactor is NADP(+).

It localises to the peroxisome matrix. The enzyme catalyses 2 H2O2 = O2 + 2 H2O. Functionally, catalyzes the degradation of hydrogen peroxide (H(2)O(2)) generated by peroxisomal oxidases to water and oxygen, thereby protecting cells from the toxic effects of hydrogen peroxide. Promotes growth of cells including T-cells, B-cells, myeloid leukemia cells, melanoma cells, mastocytoma cells and normal and transformed fibroblast cells. The sequence is that of Catalase (CAT) from Sus scrofa (Pig).